Consider the following 234-residue polypeptide: Glucosamine-6-phosphate deaminase (234 aa).

D62 serves as the catalytic Proton acceptor; for enolization step. Catalysis depends on N128, which acts as the For ring-opening step. The Proton acceptor; for ring-opening step role is filled by H130. The active-site For ring-opening step is the E135.

It belongs to the glucosamine/galactosamine-6-phosphate isomerase family. NagB subfamily.

It carries out the reaction alpha-D-glucosamine 6-phosphate + H2O = beta-D-fructose 6-phosphate + NH4(+). Its pathway is amino-sugar metabolism; N-acetylneuraminate degradation; D-fructose 6-phosphate from N-acetylneuraminate: step 5/5. Functionally, catalyzes the reversible isomerization-deamination of glucosamine 6-phosphate (GlcN6P) to form fructose 6-phosphate (Fru6P) and ammonium ion. The sequence is that of Glucosamine-6-phosphate deaminase from Streptococcus pyogenes serotype M1.